Consider the following 357-residue polypeptide: CCN family member 3 (357 aa).

A signal peptide spans Met1–Ala31. An IGFBP N-terminal domain is found at Thr32 to Val105. 6 disulfide bridges follow: Cys35/Cys61, Cys39/Cys63, Cys43/Cys64, Cys50/Cys67, Cys75/Cys89, and Cys81/Cys102. N-linked (GlcNAc...) asparagine glycosylation occurs at Asn97. Residues Asp108–Gly174 enclose the VWFC domain. The 46-residue stretch at Asn205–Glu250 folds into the TSP type-1 domain. Residue Cys244 is the site of S-palmitoyl cysteine attachment. 5 disulfides stabilise this stretch: Cys264/Cys301, Cys281/Cys315, Cys292/Cys331, Cys295/Cys333, and Cys300/Cys337. Positions Cys264 to Pro338 constitute a CTCK domain. Asn280 is a glycosylation site (N-linked (GlcNAc...) asparagine).

The protein belongs to the CCN family. Interacts with FBLN1. Interacts (via CTCK domain) with NOTCH1 (via the EGF-like repeat region). Interacts with GJA1/CX43. Interacts with ITGA5:ITGB1, ITGAV:ITGB3 and ITGAV:ITGB5. Interacts with ZDHHC22; the interaction may lead to CCN3 palmitoylation. In terms of processing, may be palmitoylated on Cys-244, which is important for extracellular secretion. As to expression, expressed in endothelial cells (at protein level). Expressed in bone marrow and thymic cells.

The protein localises to the secreted. The protein resides in the cytoplasm. Its subcellular location is the cell junction. It localises to the gap junction. Immediate-early protein playing a role in various cellular processes including proliferation, adhesion, migration, differentiation and survival. Acts by binding to integrins or membrane receptors such as NOTCH1. Essential regulator of hematopoietic stem and progenitor cell function. Inhibits myogenic differentiation through the activation of Notch-signaling pathway. Inhibits vascular smooth muscle cells proliferation by increasing expression of cell-cycle regulators such as CDKN2B or CDKN1A independently of TGFB1 signaling. Ligand of integrins ITGAV:ITGB3 and ITGA5:ITGB1, acts directly upon endothelial cells to stimulate pro-angiogenic activities and induces angiogenesis. In endothelial cells, supports cell adhesion, induces directed cell migration (chemotaxis) and promotes cell survival. Also plays a role in cutaneous wound healing acting as integrin receptor ligand. Supports skin fibroblast adhesion through ITGA5:ITGB1 and ITGA6:ITGB1 and induces fibroblast chemotaxis through ITGAV:ITGB5. Seems to enhance bFGF-induced DNA synthesis in fibroblasts. Involved in bone regeneration as a negative regulator. Enhances the articular chondrocytic phenotype, whereas it repressed the one representing endochondral ossification. Impairs pancreatic beta-cell function, inhibits beta-cell proliferation and insulin secretion. Plays a role as negative regulator of endothelial pro-inflammatory activation reducing monocyte adhesion, its anti-inflammatory effects occur secondary to the inhibition of NF-kappaB signaling pathway. Contributes to the control and coordination of inflammatory processes in atherosclerosis. Attenuates inflammatory pain through regulation of IL1B- and TNF-induced MMP9, MMP2 and CCL2 expression. Inhibits MMP9 expression through ITGB1 engagement. Brain osteoanabolic hormone. Drives osteogenesis in osteochondral skeletal stem cells. During lactation, maintains the maternal skeleton and viability of offspring. The sequence is that of CCN family member 3 from Homo sapiens (Human).